A 383-amino-acid chain; its full sequence is Succinyl-diaminopimelate desuccinylase (383 aa).

His-79 serves as a coordination point for Zn(2+). Residue Asp-81 is part of the active site. Asp-110 lines the Zn(2+) pocket. Glu-141 serves as the catalytic Proton acceptor. Zn(2+) is bound by residues Glu-142, Glu-170, and His-355.

This sequence belongs to the peptidase M20A family. DapE subfamily. In terms of assembly, homodimer. The cofactor is Zn(2+). Co(2+) serves as cofactor.

It carries out the reaction N-succinyl-(2S,6S)-2,6-diaminopimelate + H2O = (2S,6S)-2,6-diaminopimelate + succinate. The protein operates within amino-acid biosynthesis; L-lysine biosynthesis via DAP pathway; LL-2,6-diaminopimelate from (S)-tetrahydrodipicolinate (succinylase route): step 3/3. Its function is as follows. Catalyzes the hydrolysis of N-succinyl-L,L-diaminopimelic acid (SDAP), forming succinate and LL-2,6-diaminopimelate (DAP), an intermediate involved in the bacterial biosynthesis of lysine and meso-diaminopimelic acid, an essential component of bacterial cell walls. This Helicobacter pylori (strain ATCC 700392 / 26695) (Campylobacter pylori) protein is Succinyl-diaminopimelate desuccinylase.